A 132-amino-acid chain; its full sequence is MADNAHYWVLLVYTFVVIALVAGMIGVSHFLGQRHLKRATIEPFESGIVTVGYARFRLPVQFYLIAMFFVIFDLEAAYLYAWATAVHAAGWTGYLVIAVFILALLAALAYLWRAGALEWGPKPRALAIVRRR.

Transmembrane regions (helical) follow at residues 7–27 (YWVLLVYTFVVIALVAGMIGV), 62–82 (FYLIAMFFVIFDLEAAYLYAW), and 91–111 (WTGYLVIAVFILALLAALAYL).

This sequence belongs to the complex I subunit 3 family. In terms of assembly, NDH-1 is composed of 14 different subunits. Subunits NuoA, H, J, K, L, M, N constitute the membrane sector of the complex.

Its subcellular location is the cell inner membrane. It carries out the reaction a quinone + NADH + 5 H(+)(in) = a quinol + NAD(+) + 4 H(+)(out). In terms of biological role, NDH-1 shuttles electrons from NADH, via FMN and iron-sulfur (Fe-S) centers, to quinones in the respiratory chain. The immediate electron acceptor for the enzyme in this species is believed to be ubiquinone. Couples the redox reaction to proton translocation (for every two electrons transferred, four hydrogen ions are translocated across the cytoplasmic membrane), and thus conserves the redox energy in a proton gradient. The chain is NADH-quinone oxidoreductase subunit A from Acidiphilium cryptum (strain JF-5).